The chain runs to 254 residues: MATIKEIQQRLELVTELSDSFLEEVAKDQRSGVQKAVEKRKKAIQAELDEDLRLDQMIRYEKELYQSGYQAIAGIDEVGRGPLAGPVVAAAVILPPGCKIKGLNDSKKIPKKKHQEIYQAVMDKALAVGIGLMDSDIIDKVNIYEATKLAMKEALSKLPLKPDYLLIDAMKLDVEIPQESIIKGDANSLSIAAASIVAKVTRDRLMADYDKEFPGYAFAQNAGYGTKRHLEGLEHYGVSPIHRKTFEPVKSMLG.

One can recognise an RNase H type-2 domain in the interval 70–254; that stretch reads QAIAGIDEVG…TFEPVKSMLG (185 aa). Asp76, Glu77, and Asp168 together coordinate a divalent metal cation.

Belongs to the RNase HII family. Requires Mn(2+) as cofactor. Mg(2+) serves as cofactor.

The protein resides in the cytoplasm. It carries out the reaction Endonucleolytic cleavage to 5'-phosphomonoester.. Endonuclease that specifically degrades the RNA of RNA-DNA hybrids. This Streptococcus gordonii (strain Challis / ATCC 35105 / BCRC 15272 / CH1 / DL1 / V288) protein is Ribonuclease HII.